Here is a 164-residue protein sequence, read N- to C-terminus: Putative anionic 4-hydroxy-benzoate permease (164 aa).

The tract at residues 1-30 is disordered; the sequence is CGRRRGSLAWPDASSPSANPRPGAGAAESS. A run of 3 helical transmembrane segments spans residues 62 to 82, 97 to 117, and 126 to 146; these read LWVA…LMFM, GMAQ…VGGL, and PALT…MLAG.

Belongs to the major facilitator superfamily. Cyanate porter (TC 2.A.1.17) family.

The protein localises to the cell membrane. May be involved in uptake of anionic 4-hydroxy-benzoate. This is Putative anionic 4-hydroxy-benzoate permease from Thauera aromatica.